The sequence spans 134 residues: Phosphoribosyl-AMP cyclohydrolase (134 aa).

Asp80 contacts Mg(2+). Residue Cys81 participates in Zn(2+) binding. Asp82 and Asp84 together coordinate Mg(2+). 2 residues coordinate Zn(2+): Cys98 and Cys105.

Belongs to the PRA-CH family. As to quaternary structure, homodimer. The cofactor is Mg(2+). Zn(2+) serves as cofactor.

The protein resides in the cytoplasm. The enzyme catalyses 1-(5-phospho-beta-D-ribosyl)-5'-AMP + H2O = 1-(5-phospho-beta-D-ribosyl)-5-[(5-phospho-beta-D-ribosylamino)methylideneamino]imidazole-4-carboxamide. Its pathway is amino-acid biosynthesis; L-histidine biosynthesis; L-histidine from 5-phospho-alpha-D-ribose 1-diphosphate: step 3/9. Functionally, catalyzes the hydrolysis of the adenine ring of phosphoribosyl-AMP. This Janthinobacterium sp. (strain Marseille) (Minibacterium massiliensis) protein is Phosphoribosyl-AMP cyclohydrolase.